The primary structure comprises 503 residues: Aminoaldehyde dehydrogenase 2, peroxisomal (503 aa).

Na(+) contacts are provided by Ile28, Asp99, and Leu189. 238 to 245 serves as a coordination point for NAD(+); the sequence is GSTMTGSK. Catalysis depends on Glu260, which acts as the Proton acceptor. NAD(+)-binding residues include Cys294 and Glu393. Cys294 (nucleophile) is an active-site residue. The Microbody targeting signal signature appears at 501–503; it reads SKL.

This sequence belongs to the aldehyde dehydrogenase family. As to expression, expressed in leaves, flowers and fruits.

It localises to the peroxisome. It carries out the reaction 4-aminobutanal + NAD(+) + H2O = 4-aminobutanoate + NADH + 2 H(+). The enzyme catalyses 3-aminopropanal + NAD(+) + H2O = beta-alanine + NADH + 2 H(+). The protein operates within amine and polyamine biosynthesis; betaine biosynthesis via choline pathway; betaine from betaine aldehyde: step 1/1. In terms of biological role, dehydrogenase that catalyzes the oxidation of several aminoaldehydes. Metabolizes and detoxifies aldehyde products of polyamine degradation to non-toxic amino acids. Catalyzes the oxidation of 4-aminobutanal and 3-aminopropanal to 4-aminobutanoate and beta-alanine, respectively. This chain is Aminoaldehyde dehydrogenase 2, peroxisomal, found in Malus domestica (Apple).